Here is a 661-residue protein sequence, read N- to C-terminus: tRNA uridine 5-carboxymethylaminomethyl modification enzyme MnmG (661 aa).

13-18 (GGGHAG) contributes to the FAD binding site. NAD(+) is bound at residue 285–299 (GPRYCPSVEDKINRF).

The protein belongs to the MnmG family. Homodimer. Heterotetramer of two MnmE and two MnmG subunits. FAD is required as a cofactor.

The protein localises to the cytoplasm. NAD-binding protein involved in the addition of a carboxymethylaminomethyl (cmnm) group at the wobble position (U34) of certain tRNAs, forming tRNA-cmnm(5)s(2)U34. The polypeptide is tRNA uridine 5-carboxymethylaminomethyl modification enzyme MnmG (Acidovorax sp. (strain JS42)).